Consider the following 359-residue polypeptide: MDLMSFKEKEISKKDCLELFEDTENFFDVIKLADSIRKDIVGDTVTYVVNANINFTNVCSGTCKFCAFKAEHGDPNAFFLNPDEVAKKALEARKIGATEVCIQGGLLKEIDTYFQAEILKKVKKITEPYEEIVVHAFSPMEVKSAAENAGLSVNEALKILKENGLNSMPGTAAEILNDEIRSEICPTKLKTSEWIDVVTNAHKTGIKTTCTMMYGHIEENKHLAEHLSILRKIQKETGGFTEFVPLTFLHENAPLHHMERVKSGASGMLDLKTYAISRIFFKDYIKNIQTSWVKLGTKLSQVSLNCGANDIGGTLMEESISKAAGGSYGTFMSEEKLKDMILAVGRIPKQRNTAYEIIE.

The Radical SAM core domain maps to Val45–Lys282. Residues Cys59, Cys63, and Cys66 each contribute to the [4Fe-4S] cluster site.

This sequence belongs to the radical SAM superfamily. CofH family. Consists of two subunits, CofG and CofH. [4Fe-4S] cluster is required as a cofactor.

It carries out the reaction 5-amino-6-(D-ribitylamino)uracil + L-tyrosine + S-adenosyl-L-methionine = 5-amino-5-(4-hydroxybenzyl)-6-(D-ribitylimino)-5,6-dihydrouracil + 2-iminoacetate + 5'-deoxyadenosine + L-methionine + H(+). Its pathway is cofactor biosynthesis; coenzyme F0 biosynthesis. Catalyzes the radical-mediated synthesis of 5-amino-5-(4-hydroxybenzyl)-6-(D-ribitylimino)-5,6-dihydrouracil from 5-amino-6-(D-ribitylamino)uracil and L-tyrosine. The protein is 5-amino-6-(D-ribitylamino)uracil--L-tyrosine 4-hydroxyphenyl transferase of Methanococcus maripaludis (strain C5 / ATCC BAA-1333).